The primary structure comprises 928 residues: MORC family CW-type zinc finger protein 4 (928 aa).

A CW-type zinc finger spans residues 417–469 (RIPDQTWVQCDECLKWRRLPGMVDPSTLPARWFCYYNPHPKFKRCSVPEEQER). 4 residues coordinate Zn(2+): C426, C429, C450, and C461. Disordered regions lie at residues 474 to 510 (LHRS…TPPL), 527 to 546 (NSPS…PRLK), 599 to 649 (AYPE…DQDQ), and 718 to 766 (RAES…LKRT). The span at 485–497 (AAEKKQKPMESDK) shows a compositional bias: basic and acidic residues. Composition is skewed to basic and acidic residues over residues 626–636 (ESNKHTEENRE), 739–748 (KGKDCQDSRS), and 756–766 (TPKESEELKRT). Residues 758 to 867 (KESEELKRTT…LEVLQKAQVS (110 aa)) adopt a coiled-coil conformation.

Its subcellular location is the nucleus. In terms of biological role, histone methylation reader which binds to non-methylated (H3K4me0), monomethylated (H3K4me1), dimethylated (H3K4me2) and trimethylated (H3K4me3) 'Lys-4' on histone H3. The order of binding preference is H3K4me3 &gt; H3K4me2 &gt; H3K4me1 &gt; H3K4me0. The sequence is that of MORC family CW-type zinc finger protein 4 (Morc4) from Mus musculus (Mouse).